A 2053-amino-acid chain; its full sequence is Cell adhesion molecule DSCAML1 (2053 aa).

The first 18 residues, 1–18, serve as a signal peptide directing secretion; sequence MWLVTFLLLLDSLHKARP. Ig-like C2-type domains are found at residues 19 to 119, 115 to 217, 226 to 310, 314 to 396, 408 to 501, 506 to 586, 596 to 685, 690 to 784, and 788 to 885; these read EDVG…NIRI, PNIR…ARLS, PTIL…GILT, PLHV…QTAQ, PRIV…ARIN, PSIR…LSIS, PPLI…RQLI, PRFV…MFLT, and PAMI…LTVQ. Over 19 to 1591 the chain is Extracellular; it reads EDVGTSLYFV…AQGEGDDVKK (1573 aa). Intrachain disulfides connect Cys-47/Cys-103, Cys-146/Cys-198, Cys-247/Cys-294, Cys-336/Cys-386, Cys-429/Cys-485, Cys-526/Cys-575, and Cys-617/Cys-669. N-linked (GlcNAc...) asparagine glycosylation occurs at Asn-79. Residues Asn-368 and Asn-471 are each glycosylated (N-linked (GlcNAc...) asparagine). 2 N-linked (GlcNAc...) asparagine glycosylation sites follow: Asn-666 and Asn-710. Residues Cys-711 and Cys-767 are joined by a disulfide bond. N-linked (GlcNAc...) asparagine glycosylation is present at Asn-809. A disulfide bond links Cys-810 and Cys-867. 4 Fibronectin type-III domains span residues 887–984, 989–1088, 1093–1189, and 1193–1288; these read PPDP…TEEA, PPMD…TLED, PPEN…TKED, and PPAG…AGKA. N-linked (GlcNAc...) asparagine glycosylation is found at Asn-1144 and Asn-1162. The Ig-like C2-type 10 domain maps to 1278-1377; sequence EKVTIEPAGK…TGGFDTIIVN (100 aa). A disulfide bridge connects residues Cys-1311 and Cys-1363. The N-linked (GlcNAc...) asparagine glycan is linked to Asn-1345. 2 consecutive Fibronectin type-III domains span residues 1383–1477 and 1478–1578; these read PPDQ…THGR and EPSF…TIPP. Asn-1561 carries an N-linked (GlcNAc...) asparagine glycan. A helical transmembrane segment spans residues 1592–1612; it reads LFTIGCPVILATLGVALLFVV. Topologically, residues 1613–2053 are cytoplasmic; it reads RKKRKEKRLK…GAYSKSYTLV (441 aa). Disordered stretches follow at residues 1716–1741, 1773–1803, 1840–1862, and 1974–2053; these read LIDM…HSTR, HGVT…STES, SSDQ…STPS, and LAMP…YTLV. Over residues 1732-1741 the composition is skewed to basic residues; sequence KNVKSAHSTR. Residues 1773–1789 show a composition bias toward polar residues; sequence HGVTVTESDSYSASLSQ. A compositionally biased stretch (pro residues) spans 1977–1993; the sequence is PAPPAGTAPPAPGPTPS.

Homodimer; mediates homophilic interactions to promote cell adhesion. In terms of tissue distribution, in the retina, expressed in the rod photoreceptors, AII amacrine cells and rod bipolar cells (at protein level).

It localises to the cell membrane. It is found in the synapse. Its function is as follows. Cell adhesion molecule that plays a role in neuronal self-avoidance. Promotes repulsion between specific neuronal processes of either the same cell or the same subtype of cells. Promotes both isoneuronal self-avoidance for creating an orderly neurite arborization in retinal rod bipolar cells and heteroneuronal self-avoidance to maintain mosaic spacing between AII amacrine cells. Adhesion molecule that promotes lamina-specific synaptic connections in the retina: expressed in specific subsets of interneurons and retinal ganglion cells (RGCs) and promotes synaptic connectivity via homophilic interactions. This chain is Cell adhesion molecule DSCAML1 (Dscaml1), found in Mus musculus (Mouse).